We begin with the raw amino-acid sequence, 184 residues long: Major urinary protein 3 (184 aa).

Residues 1–22 (MKLLLPLLLLLCLELTLVCIHA) form the signal peptide. N-linked (GlcNAc...) asparagine glycosylation is present at Asn66. Cys86 and Cys179 are disulfide-bonded.

The protein belongs to the calycin superfamily. Lipocalin family. In terms of processing, glycosylated. As to expression, abundant in the urine of adult male mice but absent from that of females.

It localises to the secreted. Binds pheromones that are released from drying urine of males. These pheromones affect the sexual behavior of females. This is Major urinary protein 3 (Mup3) from Mus musculus (Mouse).